The following is a 329-amino-acid chain: ATP-dependent (S)-NAD(P)H-hydrate dehydratase (329 aa).

The transit peptide at 1-28 directs the protein to the mitochondrion; that stretch reads MALGPGCRAVRGCRPVLKRAFSLHKAHS. The 292-residue stretch at 35 to 326 folds into the YjeF C-terminal domain; it reads ILQLVRSVVP…AEVGPAFRRL (292 aa). N6-acetyllysine is present on Lys-49. Tyr-67 bears the Phosphotyrosine mark. Residues Gly-135 and 188 to 194 each bind (6S)-NADPHX; that span reads NHVEFGR. Residues 228-232 and 247-256 each bind ATP; these read KGEQD and GSGRRCGGQG. Residue Asp-257 participates in (6S)-NADPHX binding.

It belongs to the NnrD/CARKD family. It depends on Mg(2+) as a cofactor.

It localises to the mitochondrion. It catalyses the reaction (6S)-NADHX + ATP = ADP + phosphate + NADH + H(+). The catalysed reaction is (6S)-NADPHX + ATP = ADP + phosphate + NADPH + H(+). In terms of biological role, catalyzes the dehydration of the S-form of NAD(P)HX at the expense of ATP, which is converted to ADP. Together with NAD(P)HX epimerase, which catalyzes the epimerization of the S- and R-forms, the enzyme allows the repair of both epimers of NAD(P)HX, a damaged form of NAD(P)H that is a result of enzymatic or heat-dependent hydration. This chain is ATP-dependent (S)-NAD(P)H-hydrate dehydratase, found in Bos taurus (Bovine).